A 252-amino-acid polypeptide reads, in one-letter code: Carboxymethylenebutenolidase (252 aa).

Residues 1–28 (MCHNKSSAPPTPAHISIQQNRTPGTDPV) form a disordered region. Active-site residues include cysteine 126, aspartate 183, and histidine 214.

Belongs to the dienelactone hydrolase family.

The enzyme catalyses 2-(5-oxo-2,5-dihydrofuran-2-ylidene)acetate + H2O = 4-oxohex-2-enedioate + H(+). It participates in aromatic compound metabolism; 3-chlorocatechol degradation. Its function is as follows. Ring cleavage of cyclic ester dienelactone to produce maleylacetate. The protein is Carboxymethylenebutenolidase (clcD) of Rhodococcus opacus (Nocardia opaca).